The following is a 144-amino-acid chain: Protein D (144 aa).

In Escherichia coli, this protein is Protein D (D).